Here is a 305-residue protein sequence, read N- to C-terminus: Probable G-protein coupled receptor 141 (305 aa).

Topologically, residues 1–22 are extracellular; the sequence is MPGHNTSRNSSCDPIVTPHLIS. Residues Asn-5 and Asn-9 are each glycosylated (N-linked (GlcNAc...) asparagine). The chain crosses the membrane as a helical span at residues 23 to 43; the sequence is LYFIVLIGGLVGVISILFLLV. Residues 44 to 50 lie on the Cytoplasmic side of the membrane; sequence KMNTRSV. Residues 51–71 traverse the membrane as a helical segment; that stretch reads TTMAVINLVVVHSVFLLTVPF. At 72–89 the chain is on the extracellular side; the sequence is RLTYLIKKTWMFGLPFCK. The helical transmembrane segment at 90 to 110 threads the bilayer; that stretch reads FVSAMLHIHMYLTFLFYVVIL. The Cytoplasmic portion of the chain corresponds to 111-131; it reads VTRYLIFFKCKDKVEFYRKLH. Residues 132 to 152 form a helical membrane-spanning segment; the sequence is AVAASAGMWTLVIVIVVPLVV. Residues 153–183 lie on the Extracellular side of the membrane; the sequence is SRYGIHEEYNEEHCFKFHKELAYTYVKIINY. A helical membrane pass occupies residues 184 to 204; sequence MIVIFVIAVAVILLVFQVFII. Residues 205 to 227 lie on the Cytoplasmic side of the membrane; that stretch reads MLMVQKLRHSLLSHQEFWAQLKN. A helical transmembrane segment spans residues 228–248; sequence LFFIGVILVCFLPYQFFRIYY. The Extracellular portion of the chain corresponds to 249-267; that stretch reads LNVVTHSNACNSKVAFYNE. Residues 268 to 288 form a helical membrane-spanning segment; sequence IFLSVTAISCYDLLLFVFGGS. Residues 289-305 lie on the Cytoplasmic side of the membrane; it reads HWFKQKIIGLWNCVLCR.

This sequence belongs to the G-protein coupled receptor 1 family.

It localises to the cell membrane. Orphan receptor. In Homo sapiens (Human), this protein is Probable G-protein coupled receptor 141 (GPR141).